The following is a 519-amino-acid chain: Cytochrome P450 monooxygenase FPY7 (519 aa).

Residues 12–34 (SLSLRWKIIVTLLAIYTLRIIGT) form a helical membrane-spanning segment. Residue Cys465 coordinates heme.

Belongs to the cytochrome P450 family. It depends on heme as a cofactor.

It localises to the membrane. Its pathway is secondary metabolite biosynthesis. In terms of biological role, cytochrome P450 monooxygenase; part of the gene cluster that mediates the biosynthesis of the gamma-pyrones fusapyrone (FPY) and deoxyfusapyrone (dFPY). FPY is an undecaketide and thus likely synthesized by the polyketide synthase FPY1 from acetyl-CoA functioning as starter unit and the addition of 10 malonyl-CoA extender units by successive Claisen-condensations. Next to this, FPY shares some rare features: C-glycosylated 4-deoxyglucose at C-3, a gem-dimethyl group at C-13, and an alpha-beta to beta-gamma double bond shift at C-20. During FPY biosynthesis mono-C-methyl groups are transferred to the tetra-, penta-, hexa- and heptaketide, while two C-methyl groups are transferred to the nonaketide, suggesting that the CMet domain is programmed to selectively catalyze two successive C-alpha-methylation reactions of the nonaketide, while other alpha-carbons are non- or mono-methylated only. While the origin of the 4'-deoxyglucose moiety remains opaque, its transfer to C-3 is most likely mediated by the C-glycosyltransferase FPY2. Next to this, the hydroxyl group present at C-33 and discriminating between FPY and dFPY, is likely to be installed by the cytochrome P450 monooxygenase FPY7. No putative function can be predicted for the remaining genes FPY3-FPY6. This chain is Cytochrome P450 monooxygenase FPY7, found in Fusarium mangiferae (Mango malformation disease fungus).